The sequence spans 280 residues: Transcription factor HES-1 (280 aa).

The disordered stretch occupies residues 1–44 (MPADIMEKNSSSPVAATPASVNTTPDKPKTASEHRKSSKPIMEK). Low complexity predominate over residues 10–21 (SSSPVAATPASV). A compositionally biased stretch (basic and acidic residues) spans 26–35 (DKPKTASEHR). A bHLH domain is found at 34–91 (HRKSSKPIMEKRRRARINESLSQLKTLILDALKKDSSRHSKLEKADILEMTVKHLRNL). In terms of domain architecture, Orange spans 110–143 (YRAGFSECMNEVTRFLSTCEGVNTEVRTRLLGHL). Disordered stretches follow at residues 157–200 (GQPH…PPGG) and 254–280 (TSVG…PWRN). Pro residues-rich tracts occupy residues 164–174 (QAPPPPPPGPG) and 181–200 (FAPP…PPGG). The segment covering 254–271 (TSVGPNAVSPSSGPSLTA) has biased composition (polar residues). Positions 275-278 (WRPW) match the WRPW motif motif.

Transcription repression requires formation of a complex with a corepressor protein of the Groucho/TLE family. Interacts with SIRT1. Interacts (via WPRW motif) with TLE1, and more weakly with TLE2. Interacts with HES6. Interacts with an FA complex, composed of FANCA, FANCF, FANCG and FANCL, but not of FANCC, nor FANCE.

Its subcellular location is the nucleus. Its function is as follows. Transcriptional repressor of genes that require a bHLH protein for their transcription. May act as a negative regulator of myogenesis by inhibiting the functions of MYOD1 and ASH1. Binds DNA on N-box motifs: 5'-CACNAG-3' with high affinity and on E-box motifs: 5'-CANNTG-3' with low affinity. May play a role in a functional FA core complex response to DNA cross-link damage, being required for the stability and nuclear localization of FA core complex proteins, as well as for FANCD2 monoubiquitination in response to DNA damage. The polypeptide is Transcription factor HES-1 (HES1) (Bos taurus (Bovine)).